Consider the following 66-residue polypeptide: UPF0434 protein RPC_0266 (66 aa).

The protein belongs to the UPF0434 family.

This chain is UPF0434 protein RPC_0266, found in Rhodopseudomonas palustris (strain BisB18).